A 224-amino-acid chain; its full sequence is Uracil-DNA glycosylase 2 (224 aa).

Residue aspartate 64 is the Proton acceptor of the active site.

It belongs to the uracil-DNA glycosylase (UDG) superfamily. UNG family.

The protein resides in the cytoplasm. The enzyme catalyses Hydrolyzes single-stranded DNA or mismatched double-stranded DNA and polynucleotides, releasing free uracil.. In terms of biological role, excises uracil residues from the DNA which can arise as a result of misincorporation of dUMP residues by DNA polymerase or due to deamination of cytosine. This chain is Uracil-DNA glycosylase 2, found in Listeria monocytogenes serovar 1/2a (strain ATCC BAA-679 / EGD-e).